The chain runs to 107 residues: uncharacterized protein (107 aa).

Polar residues predominate over residues 80-98 (SIDNLKPTSHQNGTTNDTA). A disordered region spans residues 80 to 107 (SIDNLKPTSHQNGTTNDTATMDHLEKNE).

This is an uncharacterized protein from Human spumaretrovirus (SFVcpz(hu)).